The following is a 348-amino-acid chain: Bombesin receptor-activated protein C6orf89 homolog (348 aa).

The Cytoplasmic segment spans residues 1-58 (MDLAANEISIYDKLSETVDLVRQTGHQCGMSEKAIEKFIRQLLEKNEPQRGPPQYPLL). A helical membrane pass occupies residues 59-79 (IAVYKVLLTLGLILFTAYFVI). Residues 80–348 (QPFSSLAPEP…ICDGTTLSDL (269 aa)) lie on the Extracellular side of the membrane.

Homodimer. Interacts with BRS3. Interacts (via N-terminus) with SIN3B. Glycosylated.

It is found in the golgi apparatus membrane. It localises to the cytoplasm. Its function is as follows. Exhibits histone deacetylase (HDAC) enhancer properties. May play a role in cell cycle progression and wound repair of bronchial epithelial cells. This Mus musculus (Mouse) protein is Bombesin receptor-activated protein C6orf89 homolog.